Reading from the N-terminus, the 729-residue chain is Polyphosphate kinase (729 aa).

Positions 1-46 are disordered; that stretch reads MTEAQTRTEPSESSESSEAVAPAITSAADSAPEAPPATTAPAIENP. Residues 25 to 42 are compositionally biased toward low complexity; the sequence is TSAADSAPEAPPATTAPA. ATP is bound at residue Asn90. Mg(2+) contacts are provided by Arg422 and Arg452. The active-site Phosphohistidine intermediate is the His482. ATP is bound by residues Tyr515, Arg611, and His639.

Belongs to the polyphosphate kinase 1 (PPK1) family. It depends on Mg(2+) as a cofactor. In terms of processing, an intermediate of this reaction is the autophosphorylated ppk in which a phosphate is covalently linked to a histidine residue through a N-P bond.

The enzyme catalyses [phosphate](n) + ATP = [phosphate](n+1) + ADP. Catalyzes the reversible transfer of the terminal phosphate of ATP to form a long-chain polyphosphate (polyP). This Mycolicibacterium gilvum (strain PYR-GCK) (Mycobacterium gilvum (strain PYR-GCK)) protein is Polyphosphate kinase.